The sequence spans 686 residues: Elongation factor G 2 (686 aa).

The region spanning 7-280 (TTVRNLGILA…AVVAYLPSPL (274 aa)) is the tr-type G domain. GTP-binding positions include 16 to 23 (AHVDAGKT), 80 to 84 (DTPGH), and 134 to 137 (NKMD).

This sequence belongs to the TRAFAC class translation factor GTPase superfamily. Classic translation factor GTPase family. EF-G/EF-2 subfamily.

It localises to the cytoplasm. In terms of biological role, catalyzes the GTP-dependent ribosomal translocation step during translation elongation. During this step, the ribosome changes from the pre-translocational (PRE) to the post-translocational (POST) state as the newly formed A-site-bound peptidyl-tRNA and P-site-bound deacylated tRNA move to the P and E sites, respectively. Catalyzes the coordinated movement of the two tRNA molecules, the mRNA and conformational changes in the ribosome. This Streptomyces coelicolor (strain ATCC BAA-471 / A3(2) / M145) protein is Elongation factor G 2 (fusB).